Reading from the N-terminus, the 1128-residue chain is Membrane-associated guanylate kinase, WW and PDZ domain-containing protein 3 (1128 aa).

Residues 22-108 form the PDZ 1 domain; the sequence is WGGPAGPDPE…PVRLKTVRPG (87 aa). Positions 116–290 constitute a Guanylate kinase-like domain; that stretch reads RHYLSLQFQK…SMDFRNYMSR (175 aa). ATP is bound at residue 123-130; sequence FQKGSIDH. The disordered stretch occupies residues 184–276; that stretch reads TYDGNFYGTP…DWMKPVPSYN (93 aa). Over residues 193–204 the composition is skewed to pro residues; the sequence is PKPPAEPSPFQP. The span at 238–247 shows a compositional bias: acidic residues; the sequence is LPEDEEEEEK. Basic and acidic residues predominate over residues 257–267; the sequence is ENKEKHSDSSD. 2 WW domains span residues 295 to 328 and 341 to 374; these read EPLP…DPRL and GELP…NPVL. PDZ domains follow at residues 412-494 and 581-657; these read RTSL…TLCR and TIPL…LILR. The disordered stretch occupies residues 658-688; sequence GGPPSPTKTGKMKDKQESSGSLEALSDAIPQ. 2 PDZ domains span residues 728–810 and 852–939; these read DVFL…TVRR and DVCL…VAEE. Disordered regions lie at residues 939–985 and 999–1018; these read EEHR…GKEV and LAQP…SQAQ. Composition is skewed to polar residues over residues 946–956 and 965–974; these read SGTNSAKQSPA and AQSSASSTDR. Positions 1024–1106 constitute a PDZ 6 domain; sequence PVELERGPRG…KVLLLLRPGT (83 aa).

It belongs to the MAGUK family.

It localises to the cell membrane. The protein resides in the cell junction. The protein localises to the tight junction. Its function is as follows. Acts as a scaffolding protein at cell-cell junctions, thereby regulating various cellular and signaling processes. In Gallus gallus (Chicken), this protein is Membrane-associated guanylate kinase, WW and PDZ domain-containing protein 3 (MAGI3).